We begin with the raw amino-acid sequence, 315 residues long: T cell receptor beta chain MC.7.G5 (315 aa).

The first 21 residues, Met-1 to Ala-21, serve as a signal peptide directing secretion. Positions Asp-22–Glu-114 constitute an Ig-like V-type domain. Positions Asp-22–Glu-114 are t cell receptor beta variable 25-1. A disulfide bond links Cys-42 and Cys-110. The tract at residues Met-46 to Lys-50 is CDR1. The CDR2 stretch occupies residues Ser-68–Ser-73. N-linked (GlcNAc...) asparagine glycosylation is present at Asn-72. The tract at residues Cys-110–Phe-127 is CDR3. A t cell receptor beta joining 2-3 region spans residues Thr-122 to Leu-136. The t cell receptor beta constant 2 stretch occupies residues Asp-138–Gly-315. Positions Pro-145–Thr-254 constitute an Ig-like C1-type domain. Cys-167 and Cys-232 are disulfide-bonded. An N-linked (GlcNAc...) asparagine glycan is attached at Asn-206. Positions Cys-267–Ala-281 are connecting peptide. A helical transmembrane segment spans residues Thr-282–Leu-304. Over Met-305–Gly-315 the chain is Cytoplasmic.

Disulfide-linked heterodimer with TRAV38-2DV8*01J31*01C*01 alpha chain. The alpha-beta TR associates with the transmembrane signaling CD3 coreceptor proteins to form the TR-CD3 (TCR). The assembly of alpha-beta TR heterodimers with CD3 occurs in the endoplasmic reticulum where a single alpha-beta TR heterodimer associates with one CD3D-CD3E heterodimer, one CD3G-CD3E heterodimer and one CD247 homodimer forming a stable octameric structure. CD3D-CD3E and CD3G-CD3E heterodimers preferentially associate with TR alpha and TR beta chains (via TM domain), respectively. The association of the CD247 homodimer is the last step of TCR assembly in the endoplasmic reticulum and is required for transport to the cell surface. As to expression, expressed in MR1-restricted CD8-positive T cells.

The protein resides in the cell membrane. Its function is as follows. The beta chain of TRAV38-2DV8*01J31*01C*01/TRBV25-1*01J2S3*01C2*01 alpha-beta T cell receptor (TR) clonotype that displays pan-cancer cell recognition via the invariant MR1 molecule. On CD8-positive T cell clone MC.7.G5, likely recognizes tumor-specific or -associated metabolite(s) essential for cancer cell survival, triggering killing of many cancer cell types including lung, melanoma, leukemia, colon, breast, prostate, bone and ovarian cancer cells. Mediates cancer cell cytotoxicity in an HLA-independent manner. Has no reactivity to healthy cells even stressed or infected by bacteria. Antigen recognition initiates TR-CD3 clustering on the cell surface and intracellular activation of LCK that phosphorylates the ITAM motifs of CD3G, CD3D, CD3E and CD247 enabling the recruitment of ZAP70. In turn, ZAP70 phosphorylates LAT, which recruits numerous signaling molecules to form the LAT signalosome. The LAT signalosome propagates signal branching to three major signaling pathways, the calcium, the mitogen-activated protein kinase (MAPK) kinase and the nuclear factor NF-kappa-B (NF-kB) pathways, leading to the mobilization of transcription factors that are critical for gene expression and essential for T cell differentiation into effector/memory T cells. The protein is T cell receptor beta chain MC.7.G5 of Homo sapiens (Human).